Consider the following 354-residue polypeptide: Guanine nucleotide-binding protein G(i) subunit alpha-3 (354 aa).

Gly-2 carries N-myristoyl glycine lipidation. Cys-3 is lipidated: S-palmitoyl cysteine. The 323-residue stretch at 32 to 354 (KEVKLLLLGA…KNNLKECGLY (323 aa)) folds into the G-alpha domain. Residues 35 to 48 (KLLLLGAGESGKST) form a G1 motif region. GTP contacts are provided by Gly-42, Glu-43, Ser-44, Gly-45, Lys-46, Ser-47, Thr-48, Asp-150, Ser-151, Leu-175, Arg-176, Thr-177, Arg-178, Val-179, Lys-180, Thr-181, Val-201, Gly-203, Asn-269, Lys-270, Asp-272, Leu-273, Cys-325, Ala-326, and Thr-327. Mg(2+) is bound at residue Ser-47. Positions 173–181 (DVLRTRVKT) are G2 motif. Position 181 (Thr-181) interacts with Mg(2+). The G3 motif stretch occupies residues 196 to 205 (FKMFDVGGQR). The interval 265–272 (ILFLNKKD) is G4 motif. The tract at residues 324-329 (TCATDT) is G5 motif.

Belongs to the G-alpha family. G(i/o/t/z) subfamily. Heterotrimeric G proteins are composed of 3 units; alpha, beta and gamma. The alpha subunit contains the guanine nucleotide binding site. GTP binding causes dissociation of the heterotrimer, liberating the individual subunits so that they can interact with downstream effector proteins. Forms a complex with CCDC88A/GIV and EGFR which leads to enhanced EGFR signaling and triggering of cell migration; ligand stimulation is required for recruitment of GNAI3 to the complex. Interacts (inactive GDP-bound form) with CCDC88A/GIV (via GBA motif); the interaction leads to activation of GNAI3. Interacts (inactive GDP-bound form) with CCDC88C/DAPLE (via GBA motif); the interaction leads to activation of GNAI3. Interacts (inactive GDP-bound form) with NUCB1 (via GBA motif) and NUCB2 (via GBA motif); the interaction leads to activation of GNAI3. Interacts (inactive GDP-bound form) with PLCD4 (via GBA motif); the interaction leads to activation of GNAI3. Interacts with INSR; the interaction is probably mediated by CCDC88A/GIV. Interacts with GPSM1. Interacts (GDP-bound form) with GPSM2 (via GoLoco domains). Does not interact with RGS2. Interacts with RGS8 and RGS10; this strongly enhances the intrinsic GTPase activity. Interacts with RGS16; this strongly enhances the intrinsic GTPase activity. Interacts with RGS12. Interacts (via active GTP- or inactive GDP-bound form) with RGS14. Interacts (via active GTP-bound form) with TRPC5 (via ANK repeats) in a homotetrameric ion channel; the interaction is direct and activates the channel activity.

It localises to the cytoplasm. It is found in the cell membrane. The protein localises to the cytoskeleton. Its subcellular location is the microtubule organizing center. The protein resides in the centrosome. Functionally, heterotrimeric guanine nucleotide-binding proteins (G proteins) function as transducers downstream of G protein-coupled receptors (GPCRs) in numerous signaling cascades. The alpha chain contains the guanine nucleotide binding site and alternates between an active, GTP-bound state and an inactive, GDP-bound state. Signaling by an activated GPCR promotes GDP release and GTP binding. The alpha subunit has a low GTPase activity that converts bound GTP to GDP, thereby terminating the signal. Both GDP release and GTP hydrolysis are modulated by numerous regulatory proteins. Signaling is mediated via effector proteins, such as adenylate cyclase. Inhibits adenylate cyclase activity, leading to decreased intracellular cAMP levels. Stimulates the activity of receptor-regulated K(+) channels. The active GTP-bound form prevents the association of RGS14 with centrosomes and is required for the translocation of RGS14 from the cytoplasm to the plasma membrane. May play a role in cell division. The active GTP-bound form activates the calcium permeant TRPC5 ion channels. This is Guanine nucleotide-binding protein G(i) subunit alpha-3 (Gnai3) from Mus musculus (Mouse).